The sequence spans 326 residues: Aspartate carbamoyltransferase catalytic subunit (326 aa).

Carbamoyl phosphate is bound by residues Arg76 and Thr77. Residue Lys104 participates in L-aspartate binding. Carbamoyl phosphate contacts are provided by Arg126, His156, and Gln159. L-aspartate is bound by residues Arg189 and Arg244. 2 residues coordinate carbamoyl phosphate: Gly285 and Pro286.

Belongs to the aspartate/ornithine carbamoyltransferase superfamily. ATCase family. In terms of assembly, heterododecamer (2C3:3R2) of six catalytic PyrB chains organized as two trimers (C3), and six regulatory PyrI chains organized as three dimers (R2).

The enzyme catalyses carbamoyl phosphate + L-aspartate = N-carbamoyl-L-aspartate + phosphate + H(+). It participates in pyrimidine metabolism; UMP biosynthesis via de novo pathway; (S)-dihydroorotate from bicarbonate: step 2/3. Its function is as follows. Catalyzes the condensation of carbamoyl phosphate and aspartate to form carbamoyl aspartate and inorganic phosphate, the committed step in the de novo pyrimidine nucleotide biosynthesis pathway. The chain is Aspartate carbamoyltransferase catalytic subunit from Polynucleobacter asymbioticus (strain DSM 18221 / CIP 109841 / QLW-P1DMWA-1) (Polynucleobacter necessarius subsp. asymbioticus).